The primary structure comprises 233 residues: Sugar fermentation stimulation protein homolog (233 aa).

Belongs to the SfsA family.

This Acetivibrio thermocellus (strain ATCC 27405 / DSM 1237 / JCM 9322 / NBRC 103400 / NCIMB 10682 / NRRL B-4536 / VPI 7372) (Clostridium thermocellum) protein is Sugar fermentation stimulation protein homolog.